A 239-amino-acid chain; its full sequence is DnaA regulatory inactivator Hda (239 aa).

This sequence belongs to the DnaA family. HdA subfamily. In terms of assembly, the active form seems to be an ADP-bound monomer. Forms the RIDA complex (regulatory inactivation of DnaA) of ATP-DnaA, ADP-Hda and the DNA-loaded beta sliding clamp (dnaN).

Its function is as follows. Mediates the interaction of DNA replication initiator protein DnaA with DNA polymerase subunit beta sliding clamp (dnaN). Stimulates hydrolysis of ATP-DnaA to ADP-DnaA, rendering DnaA inactive for reinitiation, a process called regulatory inhibition of DnaA or RIDA. The chain is DnaA regulatory inactivator Hda from Yersinia pseudotuberculosis serotype O:1b (strain IP 31758).